The chain runs to 341 residues: MKIVNITTQVESIELKTPFKTALRQTSHVEFVRVEVECDNGFVGIGEASATKVITGEDIYIILTSIASVEELFLNLTCEEALGALHTKCAIGSSAKASLDIAFVHLLSQEAKKPLYEYFGATDKSALKSDITISLNEADVMLNDAKKAFSNGMDILKIKVGSDILHAIDIVRKIAKELPECDILVDANQAWSFENTVLFIENMLNTPIKLIEQPVEAPNLDGLKKITELSHIPILADEAVFTLKDAKKVIEEKCADMINIKLMKCGGVSKAIEILEFARNREFKCMLGSMLEGPYSINMALHLAFAYRDVIEFVDLDSPLLYKEMPKELDFVFDGCEIKPL.

Substrate-binding positions include threonine 132 and 157–159 (KIK). Residues aspartate 186, glutamate 212, and aspartate 237 each coordinate Mg(2+). Substrate-binding positions include lysine 261 and 315-317 (DLD).

The protein belongs to the mandelate racemase/muconate lactonizing enzyme family. It depends on Mg(2+) as a cofactor.

Its function is as follows. Catalyzes the epimerization of dipeptides with L-Glu in the second position. Has epimerase activity with L-Gly-L-Glu, L-Ala-L-Glu, L-Ser-L-Glu, L-Pro-L-Glu, L-Val-L-Glu, L-Met-L-Glu, L-Thr-L-Glu and L-Phe-L-Glu (in vitro). In Sulfurimonas denitrificans (strain ATCC 33889 / DSM 1251) (Thiomicrospira denitrificans (strain ATCC 33889 / DSM 1251)), this protein is L-amino acid-D/L-Glu epimerase.